A 126-amino-acid chain; its full sequence is Protein translocase subunit SecE (126 aa).

3 helical membrane passes run 20-40 (WLAAFVLAAAAVVGNYLYGEM), 42-62 (VVVRAAGVVVLIAAALGVAAT), and 97-117 (IVLAVSIVMALVLWGIDGIMV).

It belongs to the SecE/SEC61-gamma family. Component of the Sec protein translocase complex. Heterotrimer consisting of SecY, SecE and SecG subunits. The heterotrimers can form oligomers, although 1 heterotrimer is thought to be able to translocate proteins. Interacts with the ribosome. Interacts with SecDF, and other proteins may be involved. Interacts with SecA.

The protein resides in the cell inner membrane. In terms of biological role, essential subunit of the Sec protein translocation channel SecYEG. Clamps together the 2 halves of SecY. May contact the channel plug during translocation. In Vibrio alginolyticus, this protein is Protein translocase subunit SecE.